Reading from the N-terminus, the 505-residue chain is DNA primase DnaG (505 aa).

In terms of domain architecture, Toprim spans 167-241; sequence DAVIVVEGRA…DVDYVAFAPP (75 aa). Mg(2+) contacts are provided by glutamate 173, aspartate 215, and aspartate 217. Positions 268–410 are disordered; sequence DEPNLREAAT…PLDNEPRSIE (143 aa). The span at 318–327 shows a compositional bias: low complexity; sequence AGVVAGGARS. Composition is skewed to acidic residues over residues 349–376 and 384–402; these read GEVDEVGEDREGDMESDSDTADINDAEF and PNLDEAADAESVEETDAPL.

It belongs to the archaeal DnaG primase family. In terms of assembly, forms a ternary complex with MCM helicase and DNA. Requires Mg(2+) as cofactor.

It catalyses the reaction ssDNA + n NTP = ssDNA/pppN(pN)n-1 hybrid + (n-1) diphosphate.. Its function is as follows. RNA polymerase that catalyzes the synthesis of short RNA molecules used as primers for DNA polymerase during DNA replication. The chain is DNA primase DnaG from Halorubrum lacusprofundi (strain ATCC 49239 / DSM 5036 / JCM 8891 / ACAM 34).